The chain runs to 1099 residues: Protein transport protein Sec24A (1099 aa).

Disordered regions lie at residues 1 to 36 (MSQPGIPASGGSSTGLQAQNGAASASGSPYTNGPVQ), 65 to 139 (KTLN…LPGA), and 279 to 317 (SQPTTKNPTMSRSVGYSYPSLPPGYQNTAPPSTTGAGLP). Polar residues-rich tracts occupy residues 10–20 (GGSSTGLQAQN), 68–90 (NPVSGQSNSGGSQTVSPLSNYQG), 108–126 (SLHSGPSPQMPLPTSQNPA), 279–292 (SQPTTKNPTMSRSV), and 303–317 (YQNTAPPSTTGAGLP). Zn(2+) contacts are provided by C437, C440, C458, and C461. The interval 437 to 461 (CRSCRTYINPFVSFLDQRRWKCNLC) is zinc finger-like. The stretch at 972-1044 (PQPPILQLSV…TPESARTIAF (73 aa)) is one Gelsolin-like repeat.

Belongs to the SEC23/SEC24 family. SEC24 subfamily. In terms of assembly, COPII is composed of at least five proteins: the Sec23/24 complex, the Sec13/31 complex and Sar1. Interacts with TMED2. Interacts (as part of the Sec23/24 complex) with SEC22B; recruits SEC22B into COPII-coated vesicles for its transport from the endoplasmic reticulum to the Golgi. Interacts with STING1; promoting STING1 translocation to COPII vesicles in a STEEP1-dependent manner. Interacts with TMEM39A. Interacts with SACM1L; this interaction is reduced in the absence of TMEM39A. Interacts with kinase FAM20C; transport of FAM20C from the endoplasmic reticulum to the Golgi is likely to be mediated by COPII vesicles.

It is found in the cytoplasmic vesicle. The protein resides in the COPII-coated vesicle membrane. The protein localises to the endoplasmic reticulum membrane. Its subcellular location is the cytoplasm. It localises to the cytosol. Functionally, component of the coat protein complex II (COPII) which promotes the formation of transport vesicles from the endoplasmic reticulum (ER). The coat has two main functions, the physical deformation of the endoplasmic reticulum membrane into vesicles and the selection of cargo molecules for their transport to the Golgi complex. Plays a central role in cargo selection within the COPII complex and together with SEC24B may have a different specificity compared to SEC24C and SEC24D. May package preferentially cargos with cytoplasmic DxE or LxxLE motifs and may also recognize conformational epitopes. The protein is Protein transport protein Sec24A of Bos taurus (Bovine).